The following is a 54-amino-acid chain: Large ribosomal subunit protein bL33 (54 aa).

It belongs to the bacterial ribosomal protein bL33 family.

This chain is Large ribosomal subunit protein bL33, found in Elusimicrobium minutum (strain Pei191).